The sequence spans 544 residues: CTP synthase (544 aa).

An amidoligase domain region spans residues 1–266; it reads MATNYIFVTG…DDFVCDRFRL (266 aa). Ser14 is a binding site for CTP. Ser14 is a UTP binding site. ATP-binding positions include 15–20 and Asp72; that span reads SLGKGI. Mg(2+) contacts are provided by Asp72 and Glu140. CTP contacts are provided by residues 147 to 149, 187 to 192, and Lys223; these read DIE and KTKPTQ. Residues 187–192 and Lys223 each bind UTP; that span reads KTKPTQ. 239-241 lines the ATP pocket; it reads KDV. The region spanning 291-542 is the Glutamine amidotransferase type-1 domain; that stretch reads TIGMVGKYVE…VKAAKEHQGK (252 aa). Gly352 contributes to the L-glutamine binding site. Cys379 (nucleophile; for glutamine hydrolysis) is an active-site residue. Residues 380 to 383, Glu403, and Arg470 each bind L-glutamine; that span reads LGMQ. Catalysis depends on residues His515 and Glu517.

The protein belongs to the CTP synthase family. As to quaternary structure, homotetramer.

The catalysed reaction is UTP + L-glutamine + ATP + H2O = CTP + L-glutamate + ADP + phosphate + 2 H(+). It carries out the reaction L-glutamine + H2O = L-glutamate + NH4(+). It catalyses the reaction UTP + NH4(+) + ATP = CTP + ADP + phosphate + 2 H(+). It functions in the pathway pyrimidine metabolism; CTP biosynthesis via de novo pathway; CTP from UDP: step 2/2. Allosterically activated by GTP, when glutamine is the substrate; GTP has no effect on the reaction when ammonia is the substrate. The allosteric effector GTP functions by stabilizing the protein conformation that binds the tetrahedral intermediate(s) formed during glutamine hydrolysis. Inhibited by the product CTP, via allosteric rather than competitive inhibition. Its function is as follows. Catalyzes the ATP-dependent amination of UTP to CTP with either L-glutamine or ammonia as the source of nitrogen. Regulates intracellular CTP levels through interactions with the four ribonucleotide triphosphates. This is CTP synthase from Glaesserella parasuis serovar 5 (strain SH0165) (Haemophilus parasuis).